A 215-amino-acid polypeptide reads, in one-letter code: Myelin protein zero-like protein 2 (215 aa).

Residues 1 to 26 (MYGKSPALVLPLLLSLQLTALCPTEA) form the signal peptide. An Ig-like V-type domain is found at 27–141 (VEIYTSGALE…DGLVGTIRLS (115 aa)). Over 27-154 (VEIYTSGALE…TVPFSEIYFL (128 aa)) the chain is Extracellular. 2 N-linked (GlcNAc...) asparagine glycosylation sites follow: Asn-39 and Asn-118. A disulfide bridge links Cys-47 with Cys-123. Residues 155–175 (AVAIGSACALMIIVVIVVVLF) form a helical membrane-spanning segment. At 176–215 (QHFRKKRWADRADKAEGTKSKEEEKLNQGNKVSVFVEDTD) the chain is on the cytoplasmic side. The segment covering 187-201 (ADKAEGTKSKEEEKL) has biased composition (basic and acidic residues). The disordered stretch occupies residues 187–215 (ADKAEGTKSKEEEKLNQGNKVSVFVEDTD).

It belongs to the myelin P0 protein family. As to expression, widely expressed. Expressed in the cochlea, in Deiters' cells, possibly at contact sites with the basilar membrane. Expressed in both outer and inner auditory hair cells. In the stria vascularis, detected in the basal cell layer. Not detected in thymocytes, lymphocytes, macrophage or dendritic cells.

It localises to the membrane. Its function is as follows. Mediates homophilic cell-cell adhesion. This chain is Myelin protein zero-like protein 2 (Mpzl2), found in Mus musculus (Mouse).